The primary structure comprises 103 residues: Large ribosomal subunit protein uL24 (103 aa).

It belongs to the universal ribosomal protein uL24 family. Part of the 50S ribosomal subunit.

One of two assembly initiator proteins, it binds directly to the 5'-end of the 23S rRNA, where it nucleates assembly of the 50S subunit. Its function is as follows. One of the proteins that surrounds the polypeptide exit tunnel on the outside of the subunit. The sequence is that of Large ribosomal subunit protein uL24 from Endomicrobium trichonymphae.